The sequence spans 284 residues: Short chain dehydrogenase/reductase AacuD (284 aa).

Position 37 (Val-37) interacts with NADP(+). Catalysis depends on proton donor residues Ser-166 and Tyr-180. Residues Tyr-180, Lys-184, and Thr-215 each contribute to the NADP(+) site. Lys-184 (lowers pKa of active site Tyr) is an active-site residue.

Belongs to the short-chain dehydrogenases/reductases (SDR) family.

The protein operates within secondary metabolite biosynthesis. In terms of biological role, short chain dehydrogenase/reductase; part of the gene cluster that mediates the biosynthesis of the tetrahydroxanthone dimer secalonic acid D. The pathway begins with the synthesis of atrochrysone thioester by the polyketide synthase AacuL. The atrochrysone carboxyl ACP thioesterase AacuM then breaks the thioester bond and releases the atrochrysone carboxylic acid from AacuL. Atrochrysone carboxylic acid is decarboxylated by the decarboxylase AacuI, and oxidized by the anthrone oxygenase AacuG to yield emodin. Emodin is then reduced to emodin hydroquinone by a yet unidentified oxidoreductase. A-ring reduction by the short chain dehydrogenase AacuN, dehydration by the scytalone dehydratase-like protein AacuK and probable spontaneous re-oxidation, results in overall deoxygenation to chrysophanol. Baeyer-Villiger oxidation by the Baeyer-Villiger monooxygenase (BVMO) AacuH then yields monodictyphenone. Monodictyphenone is transformed into compounds with the tetrahydroxanthone skeleton via methylesterification by the methyltransferase AacuQ, followed by the action of the flavin-dependent monooxygenase AacuC, the isomerase AacuP, and the short chain dehydrogenase/reductase AacuF or AacuD. AacuF and AacuD should accept the same compound as a substrate but perform the ketoreduction with a different stereoselectivity, thus yielding blennolides B and A, respectively. In the final step of the biosynthesis, the cytochrome P450 monooxygenase AacuE accepts blennolide B and/or blennolide A to conduct the dimerization reaction to furnish the tetrahydroxanthone dimers, secalonic acids D, B, and F. The chain is Short chain dehydrogenase/reductase AacuD from Aspergillus aculeatus (strain ATCC 16872 / CBS 172.66 / WB 5094).